We begin with the raw amino-acid sequence, 990 residues long: Protein SUPPRESSOR OF MAX2 1 (990 aa).

The Clp R domain maps to Ile8–Asn167. 2 repeat regions span residues Leu12 to Leu83 and Ile96 to Asn167. The segment at Pro818–Gln855 is disordered. The short motif at Phe828 to Gln832 is the EAR element.

It belongs to the ClpA/ClpB family. As to quaternary structure, interacts probably with TPL/TPR in an EAR-motif dependent manner. Interacts with TPL, TPR1, TPR2 and TPR4. In terms of tissue distribution, highly expressed in dry seeds. Expressed in seedlings, rosette leaves and senescing leaves. Detected in roots and axillary shoots. Expressed in the primary rosette buds and expanding leaves of adult rosettes, the vasculature of the hypocotyls, cotyledons, and mature roots, in the midvein and petioles of young leaves, the young leaf periphery, stomata, and the root caps.

Its function is as follows. Probable component of a transcriptional corepressor complex that acts downstream of MAX2 to negatively regulate karrikins/strigolactone responses. Probable target of MAX2 during germination and seedling photomorphogenesis. Acts probably specifically in the karrikin pathway. The protein is Protein SUPPRESSOR OF MAX2 1 of Arabidopsis thaliana (Mouse-ear cress).